We begin with the raw amino-acid sequence, 403 residues long: Argininosuccinate synthase (403 aa).

10–18 lines the ATP pocket; the sequence is AYSGGLDTS. Tyr-87 contacts L-citrulline. Residue Gly-117 participates in ATP binding. Thr-119, Asn-123, and Asp-124 together coordinate L-aspartate. Asn-123 lines the L-citrulline pocket. Arg-127, Ser-175, Glu-260, and Tyr-272 together coordinate L-citrulline.

The protein belongs to the argininosuccinate synthase family. Type 1 subfamily. In terms of assembly, homotetramer.

The protein resides in the cytoplasm. The enzyme catalyses L-citrulline + L-aspartate + ATP = 2-(N(omega)-L-arginino)succinate + AMP + diphosphate + H(+). Its pathway is amino-acid biosynthesis; L-arginine biosynthesis; L-arginine from L-ornithine and carbamoyl phosphate: step 2/3. The polypeptide is Argininosuccinate synthase (Bacillus subtilis (strain 168)).